A 272-amino-acid polypeptide reads, in one-letter code: 3-methyl-2-oxobutanoate hydroxymethyltransferase (272 aa).

Residues aspartate 43 and aspartate 82 each contribute to the Mg(2+) site. Residues 43–44 (DS), aspartate 82, and lysine 112 contribute to the 3-methyl-2-oxobutanoate site. A Mg(2+)-binding site is contributed by glutamate 114. Glutamate 179 serves as the catalytic Proton acceptor.

It belongs to the PanB family. Homodecamer; pentamer of dimers. Requires Mg(2+) as cofactor.

The protein resides in the cytoplasm. The enzyme catalyses 3-methyl-2-oxobutanoate + (6R)-5,10-methylene-5,6,7,8-tetrahydrofolate + H2O = 2-dehydropantoate + (6S)-5,6,7,8-tetrahydrofolate. Its pathway is cofactor biosynthesis; (R)-pantothenate biosynthesis; (R)-pantoate from 3-methyl-2-oxobutanoate: step 1/2. In terms of biological role, catalyzes the reversible reaction in which hydroxymethyl group from 5,10-methylenetetrahydrofolate is transferred onto alpha-ketoisovalerate to form ketopantoate. The protein is 3-methyl-2-oxobutanoate hydroxymethyltransferase of Staphylococcus aureus (strain JH1).